Reading from the N-terminus, the 672-residue chain is Spermatid perinuclear RNA-binding protein (672 aa).

In terms of domain architecture, DZF spans 5-363; that stretch reads RSFANDDRHV…ALKRPFEDGL (359 aa). Positions 349–371 are disordered; it reads GAGSSALKRPFEDGLGDDKDPNK. A compositionally biased stretch (basic and acidic residues) spans 357–371; sequence RPFEDGLGDDKDPNK. The 67-residue stretch at 387 to 453 folds into the DRBM 1 domain; the sequence is DLMNALMRLN…AVKVLQAMGY (67 aa). The span at 467–476 shows a compositional bias: basic and acidic residues; it reads DEKSDNESKN. Residues 467–514 form a disordered region; it reads DEKSDNESKNDTVSSNSSNNTGNSTTETSSTLEVRTQGPILTASGKNP. Positions 477–497 are enriched in low complexity; the sequence is DTVSSNSSNNTGNSTTETSST. The DRBM 2 domain maps to 510 to 576; it reads SGKNPVMELN…ALAALEKLFS (67 aa). 2 positions are modified to asymmetric dimethylarginine: Arg-612 and Arg-617.

As to quaternary structure, interacts with EIF2AK2. Associates with microtubules; it is unsure whether such interaction is direct or indirect. As to expression, isoform 2 is expressed in spermatocytes (at protein level). Expressed in testis, thymus, ovary, liver, kidney, heart, spleen and brain. Expressed in cortex, dentate gyrus and Purkinje cell layer and granule cells of the cerebellum.

It is found in the cytoplasm. The protein localises to the cytoskeleton. Functionally, involved in spermatogenesis and sperm function. Plays a role in regulation of cell growth. Binds to double-stranded DNA and RNA. Binds most efficiently to poly(I:C) RNA than to poly(dI:dC) DNA. Also binds to single-stranded poly(G) RNA. Binds non-specifically to the mRNA PRM1 3'-UTR and adenovirus VA RNA. The protein is Spermatid perinuclear RNA-binding protein (Strbp) of Mus musculus (Mouse).